Reading from the N-terminus, the 202-residue chain is ATP-dependent Clp protease proteolytic subunit (202 aa).

The active-site Nucleophile is the Ser98. His123 is an active-site residue.

The protein belongs to the peptidase S14 family. Fourteen ClpP subunits assemble into 2 heptameric rings which stack back to back to give a disk-like structure with a central cavity, resembling the structure of eukaryotic proteasomes.

It is found in the cytoplasm. The enzyme catalyses Hydrolysis of proteins to small peptides in the presence of ATP and magnesium. alpha-casein is the usual test substrate. In the absence of ATP, only oligopeptides shorter than five residues are hydrolyzed (such as succinyl-Leu-Tyr-|-NHMec, and Leu-Tyr-Leu-|-Tyr-Trp, in which cleavage of the -Tyr-|-Leu- and -Tyr-|-Trp bonds also occurs).. Cleaves peptides in various proteins in a process that requires ATP hydrolysis. Has a chymotrypsin-like activity. Plays a major role in the degradation of misfolded proteins. This chain is ATP-dependent Clp protease proteolytic subunit, found in Syntrophobacter fumaroxidans (strain DSM 10017 / MPOB).